Reading from the N-terminus, the 536-residue chain is Feruloyl esterase B (536 aa).

The first 20 residues, 1–20 (MKTSIVLSIVALFLTSKASA), serve as a signal peptide directing secretion. The region spanning 21-59 (DCWSERLGWPCCSDSNAEVIYVDDDGDWGVENNDWCGIQ) is the CBM10 domain. The interval 22-59 (CWSERLGWPCCSDSNAEVIYVDDDGDWGVENNDWCGIQ) is cellulose-binding. Asn65 carries an N-linked (GlcNAc...) asparagine glycan. Tandem repeats lie at residues 78-90 (NQGG…DFGG), 91-103 (NQGG…DFGG), 104-116 (NQGG…DFGG), 117-129 (NQGG…DFGG), 134-146 (NQGG…DFGG), 151-163 (NQGG…DFGG), 164-176 (NQGG…DFGG), 181-193 (NQGG…DFGG), 194-206 (NQGG…DFGG), 211-223 (NQGG…DFGG), 224-236 (NQGG…DFGG), and 237-249 (NQGG…DFGG). The tract at residues 78–249 (NQGGGMPWGD…GGMQWGDFGG (172 aa)) is 12 X 13 AA repeats of N-Q-G-G-G-M-[PQ]-W-G-D-F-G-G. Residues 203 to 252 (DFGGNQGGNQGGGMPWGDFGGNQGGGMQWGDFGGNQGGGMQWGDFGGNQG) are compositionally biased toward gly residues. The interval 203-273 (DFGGNQGGNQ…SGPTVEYSTD (71 aa)) is disordered. Residues 257 to 536 (WGNQGGNSGP…WDFVKQFSLP (280 aa)) form a catalytic region.

Component of the multienzyme cellulase-hemicellulase complex.

It localises to the secreted. The catalysed reaction is feruloyl-polysaccharide + H2O = ferulate + polysaccharide.. Inhibited by the specific serine esterase inhibitor AEBSF. Its function is as follows. Involved in degradation of plant cell walls. Hydrolyzes of the feruloyl-arabinose ester bond in arabinoxylans as well as the feruloyl-galactose and feruloyl-arabinose ester bonds in pectin. In Piromyces equi, this protein is Feruloyl esterase B (ESTA).